Consider the following 471-residue polypeptide: Delta(24(24(1)))-sterol reductase erg4A (471 aa).

Residue asparagine 15 is glycosylated (N-linked (GlcNAc...) asparagine). Helical transmembrane passes span 33 to 53 (VTLI…GAVL), 89 to 109 (WTIY…LPGV), 130 to 150 (AVSS…TGVL), 159 to 179 (FGPL…VAYI), 216 to 236 (MFFE…GTAL), 244 to 264 (LVAG…NACA), 282 to 302 (GFML…HCTL), and 313 to 333 (HWNP…YWVW). Residues lysine 340, arginine 344, leucine 380, and 392 to 393 (HY) each bind NADP(+). A helical transmembrane segment spans residues 397–417 (VFFAISWGLITGFNSPFPWFY). NADP(+) is bound by residues aspartate 432, 436–440 (CRERY), and tyrosine 447.

The protein belongs to the ERG4/ERG24 family.

It localises to the endoplasmic reticulum membrane. It catalyses the reaction ergosterol + NADP(+) = ergosta-5,7,22,24(28)-tetraen-3beta-ol + NADPH + H(+). It participates in steroid metabolism; ergosterol biosynthesis. In terms of biological role, delta(24(24(1)))-sterol reductase; part of the third module of ergosterol biosynthesis pathway that includes the late steps of the pathway. Catalyzes the last step of ergosterol biosynthesis by converting ergosta-5,7,22,24(28)-tetraen-3beta-ol into ergosterol. The third module or late pathway involves the ergosterol synthesis itself through consecutive reactions that mainly occur in the endoplasmic reticulum (ER) membrane. Firstly, the squalene synthase erg9 catalyzes the condensation of 2 farnesyl pyrophosphate moieties to form squalene, which is the precursor of all steroids. Squalene synthase is crucial for balancing the incorporation of farnesyl diphosphate (FPP) into sterol and nonsterol isoprene synthesis. Secondly, squalene is converted into lanosterol by the consecutive action of the squalene epoxidase erg1 and the lanosterol synthase erg7. Then, the delta(24)-sterol C-methyltransferase erg6 methylates lanosterol at C-24 to produce eburicol. Eburicol is the substrate of the sterol 14-alpha demethylase encoded by cyp51A and cyp51B, to yield 4,4,24-trimethyl ergosta-8,14,24(28)-trienol. The C-14 reductase erg24 then reduces the C14=C15 double bond which leads to 4,4-dimethylfecosterol. A sequence of further demethylations at C-4, involving the C-4 demethylation complex containing the C-4 methylsterol oxidases erg25A or erg25B, the sterol-4-alpha-carboxylate 3-dehydrogenase erg26 and the 3-keto-steroid reductase erg27, leads to the production of fecosterol via 4-methylfecosterol. The C-8 sterol isomerase erg2 then catalyzes the reaction which results in unsaturation at C-7 in the B ring of sterols and thus converts fecosterol to episterol. The sterol-C5-desaturase erg3B then catalyzes the introduction of a C-5 double bond in the B ring to produce 5-dehydroepisterol. The 2 other sterol-C5-desaturases, erg3A and erg3C, seem to be less important in ergosterol biosynthesis. The C-22 sterol desaturase erg5 further converts 5-dehydroepisterol into ergosta-5,7,22,24(28)-tetraen-3beta-ol by forming the C-22(23) double bond in the sterol side chain. Finally, ergosta-5,7,22,24(28)-tetraen-3beta-ol is substrate of the C-24(28) sterol reductases erg4A and erg4B to produce ergosterol. Possible alternative sterol biosynthetic pathways might exist from fecosterol to ergosterol, depending on the activities of the erg3 isoforms. The chain is Delta(24(24(1)))-sterol reductase erg4A from Aspergillus fumigatus (strain ATCC MYA-4609 / CBS 101355 / FGSC A1100 / Af293) (Neosartorya fumigata).